The following is a 457-amino-acid chain: F-box/LRR-repeat protein At2g42730 (457 aa).

Residues 4-50 enclose the F-box domain; sequence KDVISRLPDEVLGRILSLISTKEAVSTSVLSKRWKNMFVLVSNLDID. LRR repeat units follow at residues 265 to 288, 292 to 315, and 318 to 343; these read MDET…MRNL, IRNV…CKEM, and FDSL…LIKN.

The protein is F-box/LRR-repeat protein At2g42730 of Arabidopsis thaliana (Mouse-ear cress).